A 568-amino-acid polypeptide reads, in one-letter code: Serine/threonine-protein kinase RIO1 (568 aa).

Disordered stretches follow at residues 14–70 (GQFD…DDDW) and 83–109 (YVWN…STPA). 2 positions are modified to phosphoserine: serine 21 and serine 22. The span at 24-38 (SENRDLKTVKEKDDI) shows a compositional bias: basic and acidic residues. Over residues 51 to 70 (GEGEIEDEEEEGYDDDDDDW) the composition is skewed to acidic residues. A compositionally biased stretch (polar residues) spans 87-105 (GGSNPQANRQTSDSSSAKM). The Protein kinase domain maps to 180–479 (TEINGCISTG…TGLKKDLSGV (300 aa)). ATP is bound by residues lysine 208, serine 278, and isoleucine 280. Aspartate 324 serves as the catalytic Proton acceptor. Asparagine 329 and aspartate 341 together coordinate Mg(2+). Aspartate 341 (4-aspartylphosphate intermediate) is an active-site residue. Residues 490 to 568 (VEERTCSDSE…EKTAKTKKGK (79 aa)) are disordered. The segment covering 497-513 (DSEDIGSSECSDTDSEE) has biased composition (acidic residues). The segment covering 514–543 (QGDHARPKKHTTDPDIDKKERKKMVKEAQR) has biased composition (basic and acidic residues). Over residues 544–568 (EKRKNKIPKHVKKRKEKTAKTKKGK) the composition is skewed to basic residues.

This sequence belongs to the protein kinase superfamily. RIO-type Ser/Thr kinase family. In terms of assembly, associates with the precursor of the 40S ribosome subunit. Interacts (via its N-terminus) with PRMT5 (via its N-terminus). Interacts with WDR77. Found in a PRMT5 complex composed of PRMT5, WDR77 and RIOK1. Interacts (via its C-terminus) with NCL; this interaction targets NCL for PRTM5 methylation. Mg(2+) serves as cofactor.

Its subcellular location is the cytoplasm. It is found in the cytosol. The enzyme catalyses L-seryl-[protein] + ATP = O-phospho-L-seryl-[protein] + ADP + H(+). It carries out the reaction L-threonyl-[protein] + ATP = O-phospho-L-threonyl-[protein] + ADP + H(+). It catalyses the reaction ATP + H2O = ADP + phosphate + H(+). In terms of biological role, involved in the final steps of cytoplasmic maturation of the 40S ribosomal subunit. Involved in processing of 18S-E pre-rRNA to the mature 18S rRNA. Required for the recycling of NOB1 and PNO1 from the late 40S precursor. The association with the very late 40S subunit intermediate may involve a translation-like checkpoint point cycle preceeding the binding to the 60S ribosomal subunit. Despite the protein kinase domain is proposed to act predominantly as an ATPase. The catalytic activity regulates its dynamic association with the 40S subunit. In addition to its role in ribosomal biogenesis acts as an adapter protein by recruiting NCL/nucleolin the to PRMT5 complex for its symmetrical methylation. The chain is Serine/threonine-protein kinase RIO1 from Homo sapiens (Human).